A 173-amino-acid polypeptide reads, in one-letter code: Ribulose bisphosphate carboxylase small subunit, chloroplastic 1 (173 aa).

A chloroplast-targeting transit peptide spans Met1–Gln49.

The protein belongs to the RuBisCO small chain family. In terms of assembly, heterohexadecamer of 8 large and 8 small subunits.

It localises to the plastid. It is found in the chloroplast. Its function is as follows. RuBisCO catalyzes two reactions: the carboxylation of D-ribulose 1,5-bisphosphate, the primary event in carbon dioxide fixation, as well as the oxidative fragmentation of the pentose substrate. Both reactions occur simultaneously and in competition at the same active site. Although the small subunit is not catalytic it is essential for maximal activity. The polypeptide is Ribulose bisphosphate carboxylase small subunit, chloroplastic 1 (Flaveria pringlei).